The following is a 177-amino-acid chain: Large ribosomal subunit protein uL5c (177 aa).

The protein belongs to the universal ribosomal protein uL5 family. Part of the 50S ribosomal subunit; contacts the 5S rRNA.

It is found in the plastid. The protein resides in the chloroplast. Binds 5S rRNA, forms part of the central protuberance of the 50S subunit. The chain is Large ribosomal subunit protein uL5c (rpl5) from Cyanidioschyzon merolae (strain NIES-3377 / 10D) (Unicellular red alga).